The chain runs to 196 residues: Peptidyl-tRNA hydrolase (196 aa).

Residue Tyr-14 coordinates tRNA. His-19 acts as the Proton acceptor in catalysis. TRNA-binding residues include Tyr-64, Asn-66, and Asn-112.

Belongs to the PTH family. In terms of assembly, monomer.

It is found in the cytoplasm. The enzyme catalyses an N-acyl-L-alpha-aminoacyl-tRNA + H2O = an N-acyl-L-amino acid + a tRNA + H(+). Hydrolyzes ribosome-free peptidyl-tRNAs (with 1 or more amino acids incorporated), which drop off the ribosome during protein synthesis, or as a result of ribosome stalling. Functionally, catalyzes the release of premature peptidyl moieties from peptidyl-tRNA molecules trapped in stalled 50S ribosomal subunits, and thus maintains levels of free tRNAs and 50S ribosomes. The protein is Peptidyl-tRNA hydrolase of Methylocella silvestris (strain DSM 15510 / CIP 108128 / LMG 27833 / NCIMB 13906 / BL2).